Reading from the N-terminus, the 489-residue chain is Lysine--tRNA ligase (489 aa).

The Mg(2+) site is built by Glu398 and Glu405.

This sequence belongs to the class-II aminoacyl-tRNA synthetase family. Homodimer. The cofactor is Mg(2+).

It localises to the cytoplasm. The enzyme catalyses tRNA(Lys) + L-lysine + ATP = L-lysyl-tRNA(Lys) + AMP + diphosphate. The polypeptide is Lysine--tRNA ligase (Moorella thermoacetica (strain ATCC 39073 / JCM 9320)).